The chain runs to 76 residues: ATP synthase subunit c (76 aa).

A run of 2 helical transmembrane segments spans residues 8–28 (LLAA…GVGI) and 55–75 (VAFA…LIFV).

Belongs to the ATPase C chain family. F-type ATPases have 2 components, F(1) - the catalytic core - and F(0) - the membrane proton channel. F(1) has five subunits: alpha(3), beta(3), gamma(1), delta(1), epsilon(1). F(0) has three main subunits: a(1), b(2) and c(10-14). The alpha and beta chains form an alternating ring which encloses part of the gamma chain. F(1) is attached to F(0) by a central stalk formed by the gamma and epsilon chains, while a peripheral stalk is formed by the delta and b chains.

The protein resides in the cell membrane. In terms of biological role, f(1)F(0) ATP synthase produces ATP from ADP in the presence of a proton or sodium gradient. F-type ATPases consist of two structural domains, F(1) containing the extramembraneous catalytic core and F(0) containing the membrane proton channel, linked together by a central stalk and a peripheral stalk. During catalysis, ATP synthesis in the catalytic domain of F(1) is coupled via a rotary mechanism of the central stalk subunits to proton translocation. Functionally, key component of the F(0) channel; it plays a direct role in translocation across the membrane. A homomeric c-ring of between 10-14 subunits forms the central stalk rotor element with the F(1) delta and epsilon subunits. This is ATP synthase subunit c from Dehalococcoides mccartyi (strain ATCC BAA-2266 / KCTC 15142 / 195) (Dehalococcoides ethenogenes (strain 195)).